A 590-amino-acid chain; its full sequence is Aspartate--tRNA(Asp/Asn) ligase (590 aa).

E175 serves as a coordination point for L-aspartate. Positions 199–202 (QQYK) are aspartate. 2 residues coordinate L-aspartate: R221 and H450. 221–223 (RDE) contributes to the ATP binding site. Residue E484 coordinates ATP. R491 is a binding site for L-aspartate. 536–539 (GVDR) contributes to the ATP binding site.

Belongs to the class-II aminoacyl-tRNA synthetase family. Type 1 subfamily. As to quaternary structure, homodimer.

Its subcellular location is the cytoplasm. It catalyses the reaction tRNA(Asx) + L-aspartate + ATP = L-aspartyl-tRNA(Asx) + AMP + diphosphate. In terms of biological role, aspartyl-tRNA synthetase with relaxed tRNA specificity since it is able to aspartylate not only its cognate tRNA(Asp) but also tRNA(Asn). Reaction proceeds in two steps: L-aspartate is first activated by ATP to form Asp-AMP and then transferred to the acceptor end of tRNA(Asp/Asn). This is Aspartate--tRNA(Asp/Asn) ligase from Nitrobacter winogradskyi (strain ATCC 25391 / DSM 10237 / CIP 104748 / NCIMB 11846 / Nb-255).